Consider the following 891-residue polypeptide: Aconitate hydratase A (891 aa).

The [4Fe-4S] cluster site is built by Cys-435, Cys-501, and Cys-504.

This sequence belongs to the aconitase/IPM isomerase family. As to quaternary structure, monomer. [4Fe-4S] cluster is required as a cofactor.

It catalyses the reaction citrate = D-threo-isocitrate. The protein operates within carbohydrate metabolism; tricarboxylic acid cycle; isocitrate from oxaloacetate: step 2/2. Its function is as follows. Catalyzes the reversible isomerization of citrate to isocitrate via cis-aconitate. The apo form of AcnA functions as a RNA-binding regulatory protein which plays a role as a maintenance or survival enzyme during nutritional or oxidative stress. During oxidative stress inactive AcnA apo-enzyme without iron sulfur clusters binds the acnA mRNA 3' UTRs (untranslated regions), stabilizes acnA mRNA and increases AcnA synthesis, thus mediating a post-transcriptional positive autoregulatory switch. AcnA also enhances the stability of the sodA transcript. The protein is Aconitate hydratase A of Escherichia coli (strain K12).